Here is a 164-residue protein sequence, read N- to C-terminus: uncharacterized protein (164 aa).

The N-terminal stretch at 1–22 (MKTNRSLVVIVSLITATLLLTA) is a signal peptide. Cys-23 carries the N-palmitoyl cysteine lipid modification. Cys-23 carries S-diacylglycerol cysteine lipidation.

It localises to the cell membrane. This is an uncharacterized protein from Escherichia coli (strain K12).